The primary structure comprises 185 residues: UPF0200 protein TK1334 (185 aa).

7–14 (GMPGSGKS) is a binding site for ATP.

It belongs to the UPF0200 family.

This chain is UPF0200 protein TK1334, found in Thermococcus kodakarensis (strain ATCC BAA-918 / JCM 12380 / KOD1) (Pyrococcus kodakaraensis (strain KOD1)).